The following is a 440-amino-acid chain: tRNA (guanine(37)-N(1))-methyltransferase (440 aa).

S-adenosyl-L-methionine-binding positions include histidine 217, 255 to 256, 283 to 284, and asparagine 315; these read DL and DG.

This sequence belongs to the class I-like SAM-binding methyltransferase superfamily. TRM5/TYW2 family. Monomer.

The protein resides in the mitochondrion matrix. The protein localises to the nucleus. Its subcellular location is the cytoplasm. The enzyme catalyses guanosine(37) in tRNA + S-adenosyl-L-methionine = N(1)-methylguanosine(37) in tRNA + S-adenosyl-L-homocysteine + H(+). In terms of biological role, specifically methylates the N1 position of guanosine-37 in various cytoplasmic and mitochondrial tRNAs. Methylation is not dependent on the nature of the nucleoside 5' of the target nucleoside. This is the first step in the biosynthesis of wybutosine (yW), a modified base adjacent to the anticodon of tRNAs and required for accurate decoding. The protein is tRNA (guanine(37)-N(1))-methyltransferase of Drosophila pseudoobscura pseudoobscura (Fruit fly).